Reading from the N-terminus, the 201-residue chain is tRNA (guanine-N(7)-)-methyltransferase (201 aa).

4 residues coordinate S-adenosyl-L-methionine: E34, E59, D86, and D107. Residue D107 is part of the active site. Residues K111, D143, and 181-184 (TDYE) contribute to the substrate site.

It belongs to the class I-like SAM-binding methyltransferase superfamily. TrmB family.

The catalysed reaction is guanosine(46) in tRNA + S-adenosyl-L-methionine = N(7)-methylguanosine(46) in tRNA + S-adenosyl-L-homocysteine. The protein operates within tRNA modification; N(7)-methylguanine-tRNA biosynthesis. In terms of biological role, catalyzes the formation of N(7)-methylguanine at position 46 (m7G46) in tRNA. The polypeptide is tRNA (guanine-N(7)-)-methyltransferase (Mycoplasma mobile (strain ATCC 43663 / 163K / NCTC 11711) (Mesomycoplasma mobile)).